Reading from the N-terminus, the 1560-residue chain is BRD4-interacting chromatin-remodeling complex-associated protein (1560 aa).

Disordered stretches follow at residues valine 53–glutamine 99, alanine 624–threonine 688, isoleucine 723–proline 949, asparagine 974–proline 1028, lysine 1049–threonine 1075, and serine 1215–tyrosine 1300. Over residues alanine 86 to glycine 96 the composition is skewed to gly residues. A compositionally biased stretch (low complexity) spans alanine 624 to proline 664. Positions alanine 726 to alanine 736 are enriched in pro residues. The span at proline 747 to proline 780 shows a compositional bias: low complexity. Composition is skewed to pro residues over residues leucine 791–arginine 806, proline 814–leucine 831, and valine 843–proline 880. Over residues proline 881–serine 896 the composition is skewed to low complexity. Phosphoserine is present on serine 919. Threonine 921 is modified (phosphothreonine). A compositionally biased stretch (pro residues) spans proline 932–arginine 941. The span at alanine 1005–proline 1028 shows a compositional bias: low complexity. Lysine 1057 is subject to N6-acetyllysine. Polar residues predominate over residues leucine 1227–threonine 1236. Positions alanine 1264 to leucine 1281 are enriched in low complexity. Residue lysine 1313 forms a Glycyl lysine isopeptide (Lys-Gly) (interchain with G-Cter in SUMO2) linkage. Disordered regions lie at residues asparagine 1324–alanine 1424 and tyrosine 1440–arginine 1560. Over residues histidine 1331–threonine 1356 the composition is skewed to pro residues. Residues proline 1401–glycine 1412 are compositionally biased toward low complexity. Serine 1413 bears the Phosphoserine mark. Residues alanine 1485–proline 1515 show a composition bias toward polar residues.

Component of the multiprotein chromatin-remodeling complexes SWI/SNF: SWI/SNF-A (BAF), SWI/SNF-B (PBAF) and related complexes. The canonical complex contains a catalytic subunit (either SMARCA4/BRG1/BAF190A or SMARCA2/BRM/BAF190B) and at least SMARCE1, ACTL6A/BAF53, SMARCC1/BAF155, SMARCC2/BAF170, and SMARCB1/SNF5/BAF47. Other subunits specific to each of the complexes may also be present permitting several possible combinations developmentally and tissue specific. Component of the SWI/SNF (GBAF) subcomplex, which includes at least BICRA or BICRAL (mutually exclusive), BRD9, SS18, the core BAF subunits, SMARCA2/BRM, SMARCA4/BRG1/BAF190A, ACTL6A/BAF53, SMARCC1/BAF155, and SMARCD1/BAF60A. Interacts with BRD4; the interaction bridges BRD4 to the GBAF complex. As to expression, expressed at moderate levels in heart, brain, placenta, skeletal muscle, and pancreas, and at lower levels in lung, liver and kidney.

It localises to the nucleus. In terms of biological role, component of SWI/SNF chromatin remodeling subcomplex GBAF that carries out key enzymatic activities, changing chromatin structure by altering DNA-histone contacts within a nucleosome in an ATP-dependent manner. May play a role in BRD4-mediated gene transcription. This is BRD4-interacting chromatin-remodeling complex-associated protein from Homo sapiens (Human).